A 356-amino-acid polypeptide reads, in one-letter code: Nitric oxide synthase oxygenase (356 aa).

Cys63 is a binding site for heme.

The protein belongs to the NOS family. Bacterial NOS oxygenase subfamily. As to quaternary structure, homodimer. Forms a complex with trpS2; one homodimer of trpS2 binds one homodimer of nos. It depends on heme as a cofactor. The cofactor is (6S)-5,6,7,8-tetrahydrofolate.

It catalyses the reaction 3 reduced [flavodoxin] + 2 L-arginine + 4 O2 = 3 oxidized [flavodoxin] + 2 L-citrulline + 2 nitric oxide + 4 H2O + 5 H(+). Nitric oxide synthase activity is increased by trpS2. Functionally, catalyzes the production of nitric oxide. The complex between TrpRS II and nitric oxide synthase oxygenase catalyzes the regioselective nitration of tryptophan at the 4-position. This Deinococcus radiodurans (strain ATCC 13939 / DSM 20539 / JCM 16871 / CCUG 27074 / LMG 4051 / NBRC 15346 / NCIMB 9279 / VKM B-1422 / R1) protein is Nitric oxide synthase oxygenase (nos).